Reading from the N-terminus, the 960-residue chain is Pentatricopeptide repeat-containing protein At3g63370, chloroplastic (960 aa).

The transit peptide at 1–64 (MEYAVTNMRL…PKLACFDGVL (64 aa)) directs the protein to the chloroplast. PPR repeat units follow at residues 79-109 (PVEAFAYVLELCGKRRAVSQGRQLHSRIFKT), 115-145 (LDFLAGKLVFMYGKCGSLDDAEKVFDEMPDR), 146-180 (TAFAWNTMIGAYVSNGEPASALALYWNMRVEGVPL), 181-215 (GLSSFPALLKACAKLRDIRSGSELHSLLVKLGYHS), 216-246 (TGFIVNALVSMYAKNDDLSAARRLFDGFQEK), 248-282 (DAVLWNSILSSYSTSGKSLETLELFREMHMTGPAP), 283-317 (NSYTIVSALTACDGFSYAKLGKEIHASVLKSSTHS), 319-349 (ELYVCNALIAMYTRCGKMPQAERILRQMNNA), 350-384 (DVVTWNSLIKGYVQNLMYKEALEFFSDMIAAGHKS), 385-419 (DEVSMTSIIAASGRLSNLLAGMELHAYVIKHGWDS), 420-450 (NLQVGNTLIDMYSKCNLTCYMGRAFLRMHDK), 451-485 (DLISWTTVIAGYAQNDCHVEALELFRDVAKKRMEI), 486-516 (DEMILGSILRASSVLKSMLIVKEIHCHILRK), 520-550 (DTVIQNELVDVYGKCRNMGYATRVFESIKGK), 551-585 (DVVSWTSMISSSALNGNESEAVELFRRMVETGLSA), 586-620 (DSVALLCILSAAASLSALNKGREIHCYLLRKGFCL), 621-651 (EGSIAVAVVDMYACCGDLQSAKAVFDRIERK), 652-686 (GLLQYTSMINAYGMHGCGKAAVELFDKMRHENVSP), 687-717 (DHISFLALLYACSHAGLLDEGRGFLKIMEHE), and 723-753 (WPEHYVCLVDMLGRANCVVEAFEFVKMMKTE). Residues 758 to 833 (VWCALLAACR…HPGCSWIEMD (76 aa)) form a type E motif region. The tract at residues 834 to 864 (GKVHKFTARDKSHPESKEIYEKLSEVTRKLE) is type E(+) motif. The type DYW motif stretch occupies residues 865-960 (REVGYVADTK…SGLCSCGDSW (96 aa)).

This sequence belongs to the PPR family. PCMP-H subfamily.

Its subcellular location is the plastid. It localises to the chloroplast. Its function is as follows. Involved in RNA editing event in chloroplasts. Required for the editing of a single site in rps14 transcript. The protein is Pentatricopeptide repeat-containing protein At3g63370, chloroplastic (PCMP-H83) of Arabidopsis thaliana (Mouse-ear cress).